An 89-amino-acid chain; its full sequence is Large ribosomal subunit protein bL27 (89 aa).

The disordered stretch occupies residues 1–24; the sequence is MAHKKGTGSTRNGRDSNSKRLGVK.

It belongs to the bacterial ribosomal protein bL27 family.

This Synechococcus sp. (strain WH7803) protein is Large ribosomal subunit protein bL27.